A 200-amino-acid chain; its full sequence is CASP-like protein 1D2 (200 aa).

Positions 1-26 (MASTENPDPETGKSEPIPASATTPPP) are disordered. The Cytoplasmic segment spans residues 1–36 (MASTENPDPETGKSEPIPASATTPPPSAASFLDCRK). A helical membrane pass occupies residues 37–57 (IDVIIRVLLFSATLTALIVMV). Over 58 to 85 (TSDQTEKTQLPGVSSPAPVSAEFNDSPA) the chain is Extracellular. The chain crosses the membrane as a helical span at residues 86-106 (FIFFVVALVVTSFYALMSTLV). Residues 107-129 (SISLLLKPEFTARVSVYLASLDM) lie on the Cytoplasmic side of the membrane. Residues 130–150 (VMLGILASATGTAGGVAYIAL) traverse the membrane as a helical segment. At 151-171 (KGNKEVGWNKICNVYDKFCRY) the chain is on the extracellular side. The helical transmembrane segment at 172 to 192 (IATSLALSLFATLLLLVLSIC) threads the bilayer. Residues 193-200 (SALSKRTP) are Cytoplasmic-facing.

The protein belongs to the Casparian strip membrane proteins (CASP) family. Homodimer and heterodimers.

It localises to the cell membrane. This is CASP-like protein 1D2 from Arabidopsis lyrata subsp. lyrata (Lyre-leaved rock-cress).